Here is a 130-residue protein sequence, read N- to C-terminus: Small ribosomal subunit protein uS9 (130 aa).

It belongs to the universal ribosomal protein uS9 family.

The sequence is that of Small ribosomal subunit protein uS9 from Bacillus licheniformis (strain ATCC 14580 / DSM 13 / JCM 2505 / CCUG 7422 / NBRC 12200 / NCIMB 9375 / NCTC 10341 / NRRL NRS-1264 / Gibson 46).